We begin with the raw amino-acid sequence, 156 residues long: Ribosomal RNA large subunit methyltransferase H (156 aa).

Residues L74, G105, and 124–129 (LSKLTL) each bind S-adenosyl-L-methionine.

It belongs to the RNA methyltransferase RlmH family. In terms of assembly, homodimer.

The protein localises to the cytoplasm. The catalysed reaction is pseudouridine(1915) in 23S rRNA + S-adenosyl-L-methionine = N(3)-methylpseudouridine(1915) in 23S rRNA + S-adenosyl-L-homocysteine + H(+). In terms of biological role, specifically methylates the pseudouridine at position 1915 (m3Psi1915) in 23S rRNA. The chain is Ribosomal RNA large subunit methyltransferase H from Legionella pneumophila (strain Paris).